The sequence spans 178 residues: Plasmid transfer protein TraF (178 aa).

An N-terminal signal peptide occupies residues 1 to 30; that stretch reads MSRILKRIAAGVVIAGVAALLLAAGGYAAG.

It belongs to the peptidase S26C family.

It is found in the periplasm. In terms of biological role, required for donor-specific phage sensitivity. May be involved in pilus assembly. The protein is Plasmid transfer protein TraF (traF) of Escherichia coli.